The primary structure comprises 230 residues: Porin OmpL (230 aa).

Positions M1–A20 are cleaved as a signal peptide.

The protein belongs to the oligogalacturonate-specific porin KdgM (TC 1.B.35) family. OmpL subfamily.

It localises to the cell outer membrane. In terms of biological role, outer membrane channel protein that allows an efficient diffusion of low-molecular-weight solutes such as small sugars and tetraglycine. However, the specific substrate recognized by the OmpL channel is unknown. This is Porin OmpL (ompL) from Escherichia coli O157:H7.